We begin with the raw amino-acid sequence, 415 residues long: Tumor necrosis factor receptor superfamily member 3 (415 aa).

Positions 1–30 are cleaved as a signal peptide; that stretch reads MRLPRASSPCGLAWGPLLLGLSGLLVASQP. Residues 31 to 223 are Extracellular-facing; it reads QLVPPYRIEN…NPPEPGAMLL (193 aa). N40 carries N-linked (GlcNAc...) asparagine glycosylation. TNFR-Cys repeat units follow at residues 42-81, 82-124, 125-170, and 171-213; these read TCWD…TVCK, TCPH…KAEC, RCQP…VNCV, and PCKP…TICK. Cystine bridges form between C43/C58, C59/C72, C62/C80, C83/C98, C101/C116, C104/C124, C126/C132, C139/C150, C142/C169, and C172/C187. N179 is a glycosylation site (N-linked (GlcNAc...) asparagine). A helical transmembrane segment spans residues 224 to 244; sequence LAILLSLVLFLLFTTVLACAW. Over 245–415 the chain is Cytoplasmic; it reads MRHPSLCRKL…ETETLGCQDL (171 aa). Positions 261–304 are disordered; the sequence is HPEGEESPPCPAPRADPHFPDLAEPLLPMSGDLSPSPAGPPTAP. Position 315 is a phosphoserine (S315). The tract at residues 361–399 is disordered; the sequence is LGGTRGPGDPPAPPEPPYPTPEEGAPGPSELSTPYQEDG. A compositionally biased stretch (pro residues) spans 368–380; it reads GDPPAPPEPPYPT.

As to quaternary structure, self-associates; dimerization and trimerization are promoted by lymphotoxin (LTA(3)). Associates with TRAF3. Associates with TRAF4. Associates with TRAF5.

It localises to the membrane. In terms of biological role, receptor for the heterotrimeric lymphotoxin containing LTA and LTB, and for TNFS14/LIGHT. Activates NF-kappa-B signaling upon stimulation with lymphotoxin. Promotes apoptosis via TRAF3 and TRAF5. May play a role in the development of lymphoid organs. Functionally, (Microbial infection) Plays a role in host defense against Zika virus infection. This Mus musculus (Mouse) protein is Tumor necrosis factor receptor superfamily member 3 (Ltbr).